Here is a 314-residue protein sequence, read N- to C-terminus: Melanoma-associated antigen 3 (314 aa).

The span at 1-20 shows a compositional bias: basic and acidic residues; the sequence is MPLEQRSQHCKPEEGLEARG. The disordered stretch occupies residues 1-99; the sequence is MPLEQRSQHC…QEEEGPSTFP (99 aa). Low complexity predominate over residues 21–44; the sequence is EALGLVGAQAPATEEQEAASSSST. Residues 65–87 are compositionally biased toward polar residues; sequence PQGASSLPTTMNYPLWSQSYEDS. One can recognise an MAGE domain in the interval 109 to 308; sequence LSRKVAELVH…ISYPPLHEWV (200 aa).

As to quaternary structure, interacts with TRIM28. Ubiquitinated by the DCX(DCAF12) complex specifically recognizes the diglutamate (Glu-Glu) at the C-terminus, leading to its degradation. Expressed in many tumors of several types, such as melanoma, head and neck squamous cell carcinoma, lung carcinoma and breast carcinoma, but not in normal tissues except for testes and placenta. Never expressed in kidney tumors, Leukemias and lymphomas.

Activator of ubiquitin ligase activity of RING-type zinc finger-containing E3 ubiquitin-protein ligases that acts as a repressor of autophagy. May enhance ubiquitin ligase activity of TRIM28 and stimulate p53/TP53 ubiquitination by TRIM28. Proposed to act through recruitment and/or stabilization of the Ubl-conjugating enzyme (E2) at the E3:substrate complex. May play a role in embryonal development and tumor transformation or aspects of tumor progression. In vitro promotes cell viability in melanoma cell lines. Antigen recognized on a melanoma by autologous cytolytic T-lymphocytes. The chain is Melanoma-associated antigen 3 from Homo sapiens (Human).